We begin with the raw amino-acid sequence, 509 residues long: 2-isopropylmalate synthase (509 aa).

A Pyruvate carboxyltransferase domain is found at 5–267; the sequence is IQIFDTTLRD…QTALNLEETK (263 aa). Positions 14, 202, 204, and 238 each coordinate Mn(2+). The segment at 391 to 509 is regulatory domain; that stretch reads KLETLQLQYV…AAENVEKVGN (119 aa).

This sequence belongs to the alpha-IPM synthase/homocitrate synthase family. LeuA type 1 subfamily. In terms of assembly, homodimer. It depends on Mn(2+) as a cofactor.

Its subcellular location is the cytoplasm. The enzyme catalyses 3-methyl-2-oxobutanoate + acetyl-CoA + H2O = (2S)-2-isopropylmalate + CoA + H(+). It functions in the pathway amino-acid biosynthesis; L-leucine biosynthesis; L-leucine from 3-methyl-2-oxobutanoate: step 1/4. Functionally, catalyzes the condensation of the acetyl group of acetyl-CoA with 3-methyl-2-oxobutanoate (2-ketoisovalerate) to form 3-carboxy-3-hydroxy-4-methylpentanoate (2-isopropylmalate). This is 2-isopropylmalate synthase from Staphylococcus aureus (strain Mu3 / ATCC 700698).